The chain runs to 278 residues: HTH-type transcriptional regulator HdfR (278 aa).

An HTH lysR-type domain is found at 1-58; sequence MDTELLKTFLEVSRTRHFGRAAEALYLTQSAVSFRIRQLENQLGVNLFTRHRNNIRLT. The H-T-H motif DNA-binding region spans 18 to 37; that stretch reads FGRAAEALYLTQSAVSFRIR.

It belongs to the LysR transcriptional regulatory family.

Functionally, negatively regulates the transcription of the flagellar master operon flhDC by binding to the upstream region of the operon. This chain is HTH-type transcriptional regulator HdfR, found in Salmonella newport (strain SL254).